The following is a 2564-amino-acid chain: Histone-lysine N-methyltransferase SETD2 (2564 aa).

The segment covering 1–11 has biased composition (pro residues); that stretch reads MKQLQPQPPPK. Positions 1–30 are disordered; sequence MKQLQPQPPPKMGDFYDPEHPTPEEEENEA. Positions 17–30 are enriched in basic and acidic residues; sequence DPEHPTPEEEENEA. Serine 131 bears the Phosphoserine mark. 3 disordered regions span residues 180–211, 272–561, and 607–626; these read STTV…VTEP, NEQA…TLSK, and PERE…DSPT. Residues 187-197 show a composition bias toward pro residues; that stretch reads PSSPPPPPPPA. Positions 198-207 are enriched in low complexity; the sequence is QATTLSSPAP. The span at 278–290 shows a compositional bias: basic and acidic residues; sequence SSKKEDSHIGKDE. Phosphoserine occurs at positions 321, 323, and 344. 4 stretches are compositionally biased toward basic and acidic residues: residues 335 to 400, 421 to 432, 439 to 467, and 479 to 528; these read RSHD…ERER, RSERSHYYDSDR, PYRE…EYKK, and SYRD…EAIK. A Glycyl lysine isopeptide (Lys-Gly) (interchain with G-Cter in SUMO2) cross-link involves residue lysine 359. Serine 422 carries the post-translational modification Phosphoserine. Serine 532, serine 614, and serine 624 each carry phosphoserine. Over residues 616–625 the composition is skewed to polar residues; it reads APSNRLNDSP. Phosphothreonine is present on threonine 626. Residue lysine 637 forms a Glycyl lysine isopeptide (Lys-Gly) (interchain with G-Cter in SUMO2) linkage. Residues serine 698, serine 708, serine 744, and serine 754 each carry the phosphoserine modification. A Glycyl lysine isopeptide (Lys-Gly) (interchain with G-Cter in SUMO2) cross-link involves residue lysine 776. Disordered stretches follow at residues 964-995, 1036-1101, 1133-1233, 1264-1352, and 1393-1443; these read EEGN…TSDD, EDYS…SDHW, LHKG…LGKT, QEKP…FSDQ, and LEKN…PGSA. Over residues 971–994 the composition is skewed to basic and acidic residues; sequence PERRGRPEISLDERGEGGHVHTSD. Positions 1045-1058 are enriched in acidic residues; that stretch reads SNDESDSEDTDSDD. Low complexity predominate over residues 1084 to 1095; it reads SPCSSRSSQSYR. Serine 1098 bears the Phosphoserine mark. The segment covering 1162-1171 has biased composition (polar residues); that stretch reads HPQSDGVDST. The segment covering 1172-1191 has biased composition (basic and acidic residues); sequence SHTDVKSDPLGHPNSEETVK. Residues 1215–1225 are compositionally biased toward polar residues; it reads KSWQQTTFQNR. Position 1228 is a phosphoserine (serine 1228). Over residues 1265-1276 the composition is skewed to polar residues; it reads EKPSTTYQQPDS. The segment covering 1393 to 1403 has biased composition (basic and acidic residues); the sequence is LEKNDIKDRGP. 3 positions are modified to phosphoserine: serine 1413, serine 1415, and serine 1417. The tract at residues 1418–1714 is interaction with TUBA1A; it reads DGELQDRKKV…KKERSRKKDS (297 aa). Basic and acidic residues predominate over residues 1421–1431; the sequence is LQDRKKVRVEV. The AWS domain maps to 1494-1548; sequence IKRMQCECTPLSKDERAQGEIACGEDCLNRLLMIECSSRCPNGDYCSNRRFQRKQ. Residues cysteine 1499, cysteine 1501, cysteine 1516, cysteine 1520, cysteine 1529, cysteine 1533, and cysteine 1539 each coordinate Zn(2+). Positions 1550 to 1667 constitute an SET domain; that stretch reads ADVEVILTEK…SGSELTFDYQ (118 aa). S-adenosyl-L-methionine-binding positions include 1560–1562, 1603–1605, and 1628–1629; these read KGW, HYY, and NH. Cysteine 1631 is a Zn(2+) binding site. In terms of domain architecture, Post-SET spans 1674-1690; that stretch reads EAQKCFCGSANCRGYLG. S-adenosyl-L-methionine is bound at residue glutamine 1676. Cysteine 1678 provides a ligand contact to Zn(2+). Phenylalanine 1679 provides a ligand contact to S-adenosyl-L-methionine. The Zn(2+) site is built by cysteine 1680 and cysteine 1685. Serine 1696, serine 1844, and serine 1845 each carry phosphoserine. A disordered region spans residues 1831 to 1872; that stretch reads KTAVPPLSEGDGYSSENTSRAHTPLNTPDPSTKLSTEADTDT. A compositionally biased stretch (polar residues) spans 1844-1867; the sequence is SSENTSRAHTPLNTPDPSTKLSTE. A phosphothreonine mark is found at threonine 1853 and threonine 1872. The residue at position 1888 (serine 1888) is a Phosphoserine. Residues 1921–2142 form a disordered region; it reads EELQSQQLLP…EAQKQQQQMQ (222 aa). A compositionally biased stretch (low complexity) spans 1924 to 1935; that stretch reads QSQQLLPQQLPE. Serine 1952 carries the phosphoserine modification. Basic and acidic residues predominate over residues 1960–1972; the sequence is IEPKESNGTKLEE. The span at 1973–1990 shows a compositional bias: acidic residues; the sequence is PINEETPSQDEEEGVSDV. Serine 1980, serine 1988, and serine 1995 each carry phosphoserine. Composition is skewed to basic and acidic residues over residues 1991-2004, 2014-2046, and 2059-2072; these read ESER…KTVD, DSWK…DAVG, and RSRE…TQNK. Phosphoserine occurs at positions 2080 and 2082. 2 stretches are compositionally biased toward basic and acidic residues: residues 2090–2100 and 2111–2135; these read RGTKRPDDRYD and KDRN…REAQ. A coiled-coil region spans residues 2117–2146; it reads STEERRKLFEQEVAQREAQKQQQQMQNLGM. The segment at 2137-2366 is low charge region; sequence QQQQMQNLGM…APGQPQPLQP (230 aa). The 34-residue stretch at 2389 to 2422 folds into the WW domain; the sequence is IVLPPNWKTARDPEGKIYYYHVITRQTQWDPPTW. Residues 2439 to 2465 form a disordered region; that stretch reads LGTPTYDENPMKASKKPKTAEADTSSE. The tract at residues 2457 to 2564 is interaction with POLR2A; that stretch reads TAEADTSSEL…YKPKEDTELE (108 aa).

This sequence belongs to the class V-like SAM-binding methyltransferase superfamily. Histone-lysine methyltransferase family. SET2 subfamily. Specifically interacts with hyperphosphorylated C-terminal domain (CTD) of RNA polymerase II large subunit (POLR2A): binds to CTD heptad repeats doubly phosphorylated on 'Ser-2' and 'Ser-5' of each heptad. Interacts with HTT. Interacts with IWS1. Interacts with p53/TP53; leading to regulate p53/TP53 target genes. Component of a complex with HNRNPL. Interacts with TUBA1A; the interaction is independent on alpha-tubulin acetylation on 'Lys-40'. Interacts with STAT1. Post-translationally, may be automethylated. As to expression, ubiquitously expressed.

It localises to the nucleus. The protein resides in the chromosome. The catalysed reaction is L-lysyl(36)-[histone H3] + 3 S-adenosyl-L-methionine = N(6),N(6),N(6)-trimethyl-L-lysyl(36)-[histone H3] + 3 S-adenosyl-L-homocysteine + 3 H(+). It carries out the reaction L-lysyl-[protein] + S-adenosyl-L-methionine = N(6)-methyl-L-lysyl-[protein] + S-adenosyl-L-homocysteine + H(+). The enzyme catalyses L-lysyl-[protein] + 3 S-adenosyl-L-methionine = N(6),N(6),N(6)-trimethyl-L-lysyl-[protein] + 3 S-adenosyl-L-homocysteine + 3 H(+). With respect to regulation, specifically inhibited by sinefungin derivatives. N-propyl sinefungin (Pr-SNF) interacts preferentially with SETD2. In terms of biological role, histone methyltransferase that specifically trimethylates 'Lys-36' of histone H3 (H3K36me3) using dimethylated 'Lys-36' (H3K36me2) as substrate. It is capable of trimethylating unmethylated H3K36 (H3K36me0) in vitro. Represents the main enzyme generating H3K36me3, a specific tag for epigenetic transcriptional activation. Plays a role in chromatin structure modulation during elongation by coordinating recruitment of the FACT complex and by interacting with hyperphosphorylated POLR2A. Acts as a key regulator of DNA mismatch repair in G1 and early S phase by generating H3K36me3, a mark required to recruit MSH6 subunit of the MutS alpha complex: early recruitment of the MutS alpha complex to chromatin to be replicated allows a quick identification of mismatch DNA to initiate the mismatch repair reaction. Required for DNA double-strand break repair in response to DNA damage: acts by mediating formation of H3K36me3, promoting recruitment of RAD51 and DNA repair via homologous recombination (HR). Acts as a tumor suppressor. H3K36me3 also plays an essential role in the maintenance of a heterochromatic state, by recruiting DNA methyltransferase DNMT3A. H3K36me3 is also enhanced in intron-containing genes, suggesting that SETD2 recruitment is enhanced by splicing and that splicing is coupled to recruitment of elongating RNA polymerase. Required during angiogenesis. Required for endoderm development by promoting embryonic stem cell differentiation toward endoderm: acts by mediating formation of H3K36me3 in distal promoter regions of FGFR3, leading to regulate transcription initiation of FGFR3. In addition to histones, also mediates methylation of other proteins, such as tubulins and STAT1. Trimethylates 'Lys-40' of alpha-tubulins such as TUBA1B (alpha-TubK40me3); alpha-TubK40me3 is required for normal mitosis and cytokinesis and may be a specific tag in cytoskeletal remodeling. Involved in interferon-alpha-induced antiviral defense by mediating both monomethylation of STAT1 at 'Lys-525' and catalyzing H3K36me3 on promoters of some interferon-stimulated genes (ISGs) to activate gene transcription. (Microbial infection) Recruited to the promoters of adenovirus 12 E1A gene in case of infection, possibly leading to regulate its expression. This is Histone-lysine N-methyltransferase SETD2 (SETD2) from Homo sapiens (Human).